Here is a 222-residue protein sequence, read N- to C-terminus: uncharacterized protein (222 aa).

G2 is lipidated: N-myristoyl glycine; by host.

Belongs to the mimivirus R683/R861 family.

This is an uncharacterized protein from Acanthamoeba polyphaga mimivirus (APMV).